The chain runs to 350 residues: Membrane progestin receptor alpha (350 aa).

Residues 1-80 (MATMVAQKLS…HNEAVNVWTH (80 aa)) lie on the Cytoplasmic side of the membrane. The helical transmembrane segment at 81–101 (LLAALVLLLRLAIFVGTVDFW) threads the bilayer. The Extracellular segment spans residues 102 to 105 (GDPH). Residues 106 to 126 (ALPLFIIVLASFTYLSLSALA) form a helical membrane-spanning segment. The Cytoplasmic portion of the chain corresponds to 127–139 (HLLQAKSEFWHYS). A helical transmembrane segment spans residues 140–160 (FFFLDYVGVAVYQFGSALAHF). Residues 161-165 (YYAIE) lie on the Extracellular side of the membrane. A helical membrane pass occupies residues 166–186 (PAWHAQVQTIFLPMAAFLAWL). The Cytoplasmic segment spans residues 187–239 (SCTGSCYNKYIQKPGLLGRTCQEVPSALAYALDISPVAHRILASPEPATDDPA). A helical transmembrane segment spans residues 240–260 (LLYHKCQVVFFLLAAAFFSAF). At 261–278 (MPERWFPGSCHIFGQGHQ) the chain is on the extracellular side. A helical transmembrane segment spans residues 279-299 (LFHVFLVLCTLAQLEAVALDY). Over 300–318 (EARRPIYEPLHTRWPHNFS) the chain is Cytoplasmic. A helical transmembrane segment spans residues 319-339 (GLFLLTVGSSILTAFLLSQLV). Residues 340-350 (RRKLDLDRKTQ) lie on the Extracellular side of the membrane.

Belongs to the ADIPOR family.

The protein localises to the cell membrane. In terms of biological role, plasma membrane progesterone (P4) receptor coupled to G proteins. Seems to act through a G(i) mediated pathway. May be involved in oocyte maturation. Involved in neurosteroid inhibition of apoptosis. Also binds dehydroepiandrosterone (DHEA), pregnanolone, pregnenolone and allopregnanolone. This Sus scrofa (Pig) protein is Membrane progestin receptor alpha (PAQR7).